The sequence spans 246 residues: Probable septum site-determining protein MinC (246 aa).

A disordered region spans residues 116-140; sequence AAVSPPPPPPARAEPAPPAARPAPG. A compositionally biased stretch (pro residues) spans 119–136; the sequence is SPPPPPPARAEPAPPAAR.

It belongs to the MinC family. In terms of assembly, interacts with MinD and FtsZ.

Functionally, cell division inhibitor that blocks the formation of polar Z ring septums. Rapidly oscillates between the poles of the cell to destabilize FtsZ filaments that have formed before they mature into polar Z rings. Prevents FtsZ polymerization. This chain is Probable septum site-determining protein MinC, found in Xanthomonas oryzae pv. oryzae (strain MAFF 311018).